We begin with the raw amino-acid sequence, 382 residues long: Ribosomal RNA large subunit methyltransferase G (382 aa).

Belongs to the methyltransferase superfamily. RlmG family.

Its subcellular location is the cytoplasm. It carries out the reaction guanosine(1835) in 23S rRNA + S-adenosyl-L-methionine = N(2)-methylguanosine(1835) in 23S rRNA + S-adenosyl-L-homocysteine + H(+). Specifically methylates the guanine in position 1835 (m2G1835) of 23S rRNA. The protein is Ribosomal RNA large subunit methyltransferase G of Aliivibrio salmonicida (strain LFI1238) (Vibrio salmonicida (strain LFI1238)).